A 264-amino-acid chain; its full sequence is tRNA (guanine-N(1)-)-methyltransferase (264 aa).

Residues G125 and 145–150 (LGDFVL) each bind S-adenosyl-L-methionine.

It belongs to the RNA methyltransferase TrmD family. As to quaternary structure, homodimer.

It localises to the cytoplasm. It carries out the reaction guanosine(37) in tRNA + S-adenosyl-L-methionine = N(1)-methylguanosine(37) in tRNA + S-adenosyl-L-homocysteine + H(+). Its function is as follows. Specifically methylates guanosine-37 in various tRNAs. The sequence is that of tRNA (guanine-N(1)-)-methyltransferase from Burkholderia ambifaria (strain ATCC BAA-244 / DSM 16087 / CCUG 44356 / LMG 19182 / AMMD) (Burkholderia cepacia (strain AMMD)).